The primary structure comprises 403 residues: Tryptophan synthase beta chain (403 aa).

The residue at position 88 (Lys88) is an N6-(pyridoxal phosphate)lysine.

Belongs to the TrpB family. As to quaternary structure, tetramer of two alpha and two beta chains. Pyridoxal 5'-phosphate serves as cofactor.

The catalysed reaction is (1S,2R)-1-C-(indol-3-yl)glycerol 3-phosphate + L-serine = D-glyceraldehyde 3-phosphate + L-tryptophan + H2O. Its pathway is amino-acid biosynthesis; L-tryptophan biosynthesis; L-tryptophan from chorismate: step 5/5. The beta subunit is responsible for the synthesis of L-tryptophan from indole and L-serine. This is Tryptophan synthase beta chain from Shewanella frigidimarina (strain NCIMB 400).